The sequence spans 610 residues: UvrABC system protein C (610 aa).

The GIY-YIG domain maps to 16 to 94 (SAPGVYRMYD…IKQYMPKYNV (79 aa)). Residues 203-238 (KQVISQLVAKMETAAIDMEYERAAQYRDQITALRRV) form the UVR domain.

The protein belongs to the UvrC family. As to quaternary structure, interacts with UvrB in an incision complex.

It is found in the cytoplasm. Its function is as follows. The UvrABC repair system catalyzes the recognition and processing of DNA lesions. UvrC both incises the 5' and 3' sides of the lesion. The N-terminal half is responsible for the 3' incision and the C-terminal half is responsible for the 5' incision. The protein is UvrABC system protein C of Shewanella frigidimarina (strain NCIMB 400).